The following is a 173-amino-acid chain: 2-C-methyl-D-erythritol 2,4-cyclodiphosphate synthase (173 aa).

Residues D17 and H19 each contribute to the a divalent metal cation site. Residues D17 to H19 and H49 to S50 contribute to the 4-CDP-2-C-methyl-D-erythritol 2-phosphate site. H57 contacts a divalent metal cation. Residues F76–D80, T147–E150, F154, and R157 contribute to the 4-CDP-2-C-methyl-D-erythritol 2-phosphate site.

Belongs to the IspF family. As to quaternary structure, homotrimer. Requires a divalent metal cation as cofactor.

It carries out the reaction 4-CDP-2-C-methyl-D-erythritol 2-phosphate = 2-C-methyl-D-erythritol 2,4-cyclic diphosphate + CMP. It participates in isoprenoid biosynthesis; isopentenyl diphosphate biosynthesis via DXP pathway; isopentenyl diphosphate from 1-deoxy-D-xylulose 5-phosphate: step 4/6. Its function is as follows. Involved in the biosynthesis of isopentenyl diphosphate (IPP) and dimethylallyl diphosphate (DMAPP), two major building blocks of isoprenoid compounds. Catalyzes the conversion of 4-diphosphocytidyl-2-C-methyl-D-erythritol 2-phosphate (CDP-ME2P) to 2-C-methyl-D-erythritol 2,4-cyclodiphosphate (ME-CPP) with a corresponding release of cytidine 5-monophosphate (CMP). This Ehrlichia chaffeensis (strain ATCC CRL-10679 / Arkansas) protein is 2-C-methyl-D-erythritol 2,4-cyclodiphosphate synthase.